Here is a 673-residue protein sequence, read N- to C-terminus: UvrABC system protein B (673 aa).

One can recognise a Helicase ATP-binding domain in the interval 28–414; that stretch reads ASILQNKRSQ…EAGGEIVEQL (387 aa). An ATP-binding site is contributed by 41 to 48; the sequence is GITGSGKT. Residues 94-117 carry the Beta-hairpin motif; the sequence is YYDYYQPEAYVPRTDTYIEKDMSI. Residues 433-595 enclose the Helicase C-terminal domain; sequence QVDDCLAEIR…ITPRTVKREI (163 aa). The UVR domain maps to 633-668; that stretch reads RLKIKECEKEMKKAAKEFRFEEAADWRDQMRRYQQI.

The protein belongs to the UvrB family. Forms a heterotetramer with UvrA during the search for lesions. Interacts with UvrC in an incision complex.

It localises to the cytoplasm. The UvrABC repair system catalyzes the recognition and processing of DNA lesions. A damage recognition complex composed of 2 UvrA and 2 UvrB subunits scans DNA for abnormalities. Upon binding of the UvrA(2)B(2) complex to a putative damaged site, the DNA wraps around one UvrB monomer. DNA wrap is dependent on ATP binding by UvrB and probably causes local melting of the DNA helix, facilitating insertion of UvrB beta-hairpin between the DNA strands. Then UvrB probes one DNA strand for the presence of a lesion. If a lesion is found the UvrA subunits dissociate and the UvrB-DNA preincision complex is formed. This complex is subsequently bound by UvrC and the second UvrB is released. If no lesion is found, the DNA wraps around the other UvrB subunit that will check the other stand for damage. The chain is UvrABC system protein B from Protochlamydia amoebophila (strain UWE25).